The primary structure comprises 126 residues: MAFSGTWQVYSQENIEDFLRALSLPEEVIKIGKDIKPVIDIKQTGEHFVIVVKTSQQTVTNEFTVGKEAEITSMDGKKLKCTVQLEDGKLVAKKLKFTHIQEVQGNEMIEKLTAGNATMIRKSRRM.

An N-acetylalanine modification is found at Ala-2.

It belongs to the calycin superfamily. Fatty-acid binding protein (FABP) family.

The protein resides in the cytoplasm. Binds free fatty acids and their coenzyme A derivatives, bilirubin, and some other small molecules in the cytoplasm. May be involved in intracellular lipid transport. In Schroederichthys bivius (Narrowmouthed catshark), this protein is Fatty acid-binding protein, liver (fabp1).